Reading from the N-terminus, the 120-residue chain is Large ribosomal subunit protein eL18 (120 aa).

It belongs to the eukaryotic ribosomal protein eL18 family. Part of the 50S ribosomal subunit.

The chain is Large ribosomal subunit protein eL18 from Pyrococcus furiosus (strain ATCC 43587 / DSM 3638 / JCM 8422 / Vc1).